The chain runs to 160 residues: SsrA-binding protein (160 aa).

The segment at 131 to 160 (KKEYDKRHTERERDSDRELQRAVRTKGKED) is disordered.

The protein belongs to the SmpB family.

The protein localises to the cytoplasm. Its function is as follows. Required for rescue of stalled ribosomes mediated by trans-translation. Binds to transfer-messenger RNA (tmRNA), required for stable association of tmRNA with ribosomes. tmRNA and SmpB together mimic tRNA shape, replacing the anticodon stem-loop with SmpB. tmRNA is encoded by the ssrA gene; the 2 termini fold to resemble tRNA(Ala) and it encodes a 'tag peptide', a short internal open reading frame. During trans-translation Ala-aminoacylated tmRNA acts like a tRNA, entering the A-site of stalled ribosomes, displacing the stalled mRNA. The ribosome then switches to translate the ORF on the tmRNA; the nascent peptide is terminated with the 'tag peptide' encoded by the tmRNA and targeted for degradation. The ribosome is freed to recommence translation, which seems to be the essential function of trans-translation. The sequence is that of SsrA-binding protein from Pseudomonas fluorescens (strain ATCC BAA-477 / NRRL B-23932 / Pf-5).